Reading from the N-terminus, the 325-residue chain is Flavin-dependent thymidylate synthase (325 aa).

The 256-residue stretch at 12–267 (ISVRLLEYTG…PRLFRWAGPS (256 aa)) folds into the ThyX domain. FAD-binding positions include serine 65, 89–91 (RHR), and glutamine 97. DUMP-binding positions include 86–89 (QLVR) and 97–101 (QLSHR). The ThyX motif motif lies at 89–99 (RHRVASYTQLS). The insert stretch occupies residues 110–159 (AALKACESIGLDCPSKPAETEGGRKAAYRLYSQALERAARDFGASERFAI). Arginine 205 provides a ligand contact to dUMP. 221–223 (NAR) is a binding site for FAD. A dUMP-binding site is contributed by arginine 233. Arginine 233 acts as the Involved in ionization of N3 of dUMP, leading to its activation in catalysis.

The protein belongs to the thymidylate synthase ThyX family. In terms of assembly, homotetramer. FAD is required as a cofactor.

The catalysed reaction is dUMP + (6R)-5,10-methylene-5,6,7,8-tetrahydrofolate + NADPH + H(+) = dTMP + (6S)-5,6,7,8-tetrahydrofolate + NADP(+). Its pathway is pyrimidine metabolism; dTTP biosynthesis. In terms of biological role, catalyzes the reductive methylation of 2'-deoxyuridine-5'-monophosphate (dUMP) to 2'-deoxythymidine-5'-monophosphate (dTMP) while utilizing 5,10-methylenetetrahydrofolate (mTHF) as the methyl donor, and NADPH and FADH(2) as the reductant. This is Flavin-dependent thymidylate synthase from Aeropyrum pernix (strain ATCC 700893 / DSM 11879 / JCM 9820 / NBRC 100138 / K1).